The primary structure comprises 178 residues: ATP-dependent protease subunit HslV (178 aa).

Residue T7 is part of the active site. Na(+) is bound by residues G162, C165, and T168.

Belongs to the peptidase T1B family. HslV subfamily. In terms of assembly, a double ring-shaped homohexamer of HslV is capped on each side by a ring-shaped HslU homohexamer. The assembly of the HslU/HslV complex is dependent on binding of ATP.

Its subcellular location is the cytoplasm. The enzyme catalyses ATP-dependent cleavage of peptide bonds with broad specificity.. Allosterically activated by HslU binding. Functionally, protease subunit of a proteasome-like degradation complex believed to be a general protein degrading machinery. In Burkholderia lata (strain ATCC 17760 / DSM 23089 / LMG 22485 / NCIMB 9086 / R18194 / 383), this protein is ATP-dependent protease subunit HslV.